Consider the following 610-residue polypeptide: Alpha-fetoprotein (610 aa).

Residues 1 to 18 form the signal peptide; sequence MKWVVSFFLLFLLNFSDS. Albumin domains follow at residues 19-210, 211-403, and 404-602; these read RTMH…TSIT, KELR…EELE, and KYIQ…ALIS. Position 22 (histidine 22) interacts with Cu(2+). 8 cysteine pairs are disulfide-bonded: cysteine 99/cysteine 114, cysteine 113/cysteine 124, cysteine 148/cysteine 193, cysteine 192/cysteine 201, cysteine 224/cysteine 270, cysteine 269/cysteine 277, cysteine 289/cysteine 303, and cysteine 302/cysteine 314. A phosphoserine mark is found at serine 111 and serine 115. Residues asparagine 197 and asparagine 251 are each glycosylated (N-linked (GlcNAc...) asparagine). A Phosphoserine modification is found at serine 345. Intrachain disulfides connect cysteine 385–cysteine 394, cysteine 417–cysteine 463, cysteine 462–cysteine 473, cysteine 486–cysteine 502, cysteine 501–cysteine 512, cysteine 539–cysteine 584, and cysteine 583–cysteine 592. Serine 445 is subject to Phosphoserine.

This sequence belongs to the ALB/AFP/VDB family. Dimeric and trimeric forms have been found in addition to the monomeric form. Post-translationally, sulfated. As to expression, plasma.

It is found in the secreted. Binds copper, nickel, and fatty acids as well as, and bilirubin less well than, serum albumin. This Bos taurus (Bovine) protein is Alpha-fetoprotein (AFP).